Reading from the N-terminus, the 975-residue chain is Protein spalten (975 aa).

Disordered regions lie at residues 1-31 and 64-99; these read MKKM…QLAQ and NLAQ…SNNN. A compositionally biased stretch (basic and acidic residues) spans 8–17; sequence NKKEKKEEQS. Residues 21–70 are a coiled coil; that stretch reads SSLAQQHQLAQQQYQLQQQQLQLQYQQHQQQLQLAQQQKQNEQNLAQLST. Residues 114-458 form the G-alpha domain; sequence FCGTIMILGH…DAEKRGFTTP (345 aa). A G1 motif region spans residues 117-130; that stretch reads TIMILGHTESGKTT. Residues 122–129, 261–267, 286–290, and 373–376 each bind GTP; these read GHTESGKT, ISAYDQK, GCSGK, and NTSD. The tract at residues 259–267 is G2 motif; it reads DIISAYDQK. The tract at residues 282 to 291 is G3 motif; it reads VDLFGCSGKQ. Positions 369–376 are G4 motif; sequence YLIFNTSD. A G5 motif region spans residues 427 to 432; it reads VNLLDK. Disordered regions lie at residues 455–520 and 541–700; these read FTTP…GSST and DNDS…VGSK. 3 stretches are compositionally biased toward low complexity: residues 460–478, 500–515, and 544–587; these read NQSN…SRNS, LKNV…NTTT, and SSYS…NNAT. Basic and acidic residues predominate over residues 595-688; it reads PPKEPKPVKP…DGAAESKKNG (94 aa). One can recognise a PPM-type phosphatase domain in the interval 704-972; it reads ESGFGSLQGR…DNITVLVVIL (269 aa). Mn(2+) contacts are provided by aspartate 749, glycine 750, aspartate 920, and aspartate 963.

This sequence in the N-terminal section; belongs to the G-alpha family. It in the C-terminal section; belongs to the PP2C family. G proteins are composed of 3 units; alpha, beta and gamma. The alpha chain contains the guanine nucleotide binding site. Mg(2+) is required as a cofactor. The cofactor is Mn(2+).

The protein resides in the cytoplasm. The protein localises to the cytosol. It localises to the cell membrane. It catalyses the reaction O-phospho-L-seryl-[protein] + H2O = L-seryl-[protein] + phosphate. The catalysed reaction is O-phospho-L-threonyl-[protein] + H2O = L-threonyl-[protein] + phosphate. With respect to regulation, inhibited by 50 mM NaF (sodium fluoride). Functionally, involved in cell-type differentiation and morphogenesis. Dephosphorylates casein; in vitro. May also be involved as modulators or transducers in various transmembrane signaling systems. This chain is Protein spalten (spnA), found in Dictyostelium discoideum (Social amoeba).